Reading from the N-terminus, the 387-residue chain is uncharacterized protein (387 aa).

Disordered stretches follow at residues 1–126 (MDGR…GDDE), 138–169 (GNQG…RNEE), and 275–298 (SSIF…AGNK). Residues 32–45 (SSDHRTSNSAESKK) are compositionally biased toward basic and acidic residues. 2 stretches are compositionally biased toward polar residues: residues 49-63 (SGKS…NNDN) and 78-93 (DLSS…SKGT). Over residues 155–169 (ENGKNDIEKNNRNEE) the composition is skewed to basic and acidic residues. Over residues 275 to 296 (SSIFSDSQAVTTDDEGISSTAG) the composition is skewed to polar residues.

Belongs to the ThrE exporter (TC 2.A.79) family.

This is an uncharacterized protein from Saccharomyces cerevisiae (strain ATCC 204508 / S288c) (Baker's yeast).